The primary structure comprises 365 residues: MDVVAFFTEILKFRSITPDDDGCLKFIAEFLGDFEARFIEKNGVKNLILSKRFGDGAHLAFAGHVDVVPPGEGWQSEPFTPLMKDGFIYARGAQDMKSGVAAFVCACRDAKNFNGRLTLILTSDEEGDALFGTLEALKILKERGELPQFAVVAEPTCTGVFGDTIKVGRRGSINGKILIRGVQGHVAYPEKCVNPVHQIAPLLSRIAGHDMDAGSEFFSPSKIVITDIRGGMEVCNVTPSELGIMFNVRNSDITSADDVKNYLQSVLEGLNFELSLKQSSKPFLTDKDSKIVRAMSKAVQKISGVAPQLNTKGGTSDARYLAEFGVKVVEFGVINDRIHAVDERAGVKEVERLYLVFKELIENFA.

Residue histidine 64 participates in Zn(2+) binding. Aspartate 66 is an active-site residue. Aspartate 95 contributes to the Zn(2+) binding site. Glutamate 125 (proton acceptor) is an active-site residue. Positions 126, 154, and 339 each coordinate Zn(2+).

The protein belongs to the peptidase M20A family. DapE subfamily. In terms of assembly, homodimer. Requires Zn(2+) as cofactor. The cofactor is Co(2+).

It catalyses the reaction N-succinyl-(2S,6S)-2,6-diaminopimelate + H2O = (2S,6S)-2,6-diaminopimelate + succinate. Its pathway is amino-acid biosynthesis; L-lysine biosynthesis via DAP pathway; LL-2,6-diaminopimelate from (S)-tetrahydrodipicolinate (succinylase route): step 3/3. Catalyzes the hydrolysis of N-succinyl-L,L-diaminopimelic acid (SDAP), forming succinate and LL-2,6-diaminopimelate (DAP), an intermediate involved in the bacterial biosynthesis of lysine and meso-diaminopimelic acid, an essential component of bacterial cell walls. The sequence is that of Succinyl-diaminopimelate desuccinylase from Campylobacter curvus (strain 525.92).